The following is a 334-amino-acid chain: Geminin coiled-coil domain-containing protein 1 (334 aa).

Positions 82-119 form a coiled coil; the sequence is SQLYRNKQLQDTLVQKEEELARLHEENNHLRQYLNSAL. The segment at 143–167 is disordered; sequence FRKGKRKSKEQRYSPAEIPHPKNAK.

This sequence belongs to the GEMC1 family. Highly phosphorylated by CDK2; stimulates initiation of DNA replication.

The protein localises to the nucleus. Regulator of DNA replication. Promotes initiation of chromosomal DNA replication by mediating TOPBP1- and CDK2-dependent recruitment of CDC45L onto replication origins. In Homo sapiens (Human), this protein is Geminin coiled-coil domain-containing protein 1 (GMNC).